We begin with the raw amino-acid sequence, 917 residues long: PAX3- and PAX7-binding protein 1 (917 aa).

Residues 1–11 are compositionally biased toward basic residues; sequence MFRKARRVNVR. Disordered regions lie at residues 1–123, 143–205, and 229–275; these read MFRK…FKVK, LEKS…GAFS, and RKKR…RIVF. A Phosphoserine modification is found at Ser16. Residues 16–28 are compositionally biased toward acidic residues; sequence SEEEERERDEEQE. 2 stretches are compositionally biased toward gly residues: residues 40–50 and 73–85; these read EEAGPGGGDRA and AEAG…GAEP. A Glycyl lysine isopeptide (Lys-Gly) (interchain with G-Cter in SUMO1); alternate cross-link involves residue Lys149. Residue Lys149 forms a Glycyl lysine isopeptide (Lys-Gly) (interchain with G-Cter in SUMO2); alternate linkage. 3 positions are modified to phosphoserine: Ser154, Ser155, and Ser158. The span at 161-172 shows a compositional bias: basic and acidic residues; that stretch reads PLDKTGHVKDTN. The span at 183–193 shows a compositional bias: acidic residues; it reads GEDEMDMESEK. Residue Ser191 is modified to Phosphoserine. Positions 234 to 256 are enriched in basic and acidic residues; it reads MARELGDFTPHDNEPGKGRLVRE. The segment covering 257-268 has biased composition (acidic residues); the sequence is DENDASDDEDDD. A phosphoserine mark is found at Ser262 and Ser295. 2 disordered regions span residues 362–381 and 530–564; these read SSDA…TPSN and AERE…EETS. A necessary and sufficient for interaction with PAX7 region spans residues 378–558; it reads TPSNEMTPVT…MADHLEGLSS (181 aa). Residues 542–554 are compositionally biased toward basic and acidic residues; that stretch reads AREQTGKMADHLE. Phosphoserine occurs at positions 557 and 558. A Phosphothreonine modification is found at Thr563.

It belongs to the GCF family. In terms of assembly, interacts with PAX3 and PAX7. Interacts with WDR5; associates with a histone methyltransferase (HMT) complex composed at least of RBBP5, ASH2L, SET1, SET2 and KMT2A/MLL1, KMT2D/MLL2, KMT2C/MLL3 and KMT2B/MLL4 through direct interaction with WDR5. Ubiquitous.

It is found in the nucleus. Adapter protein linking the transcription factors PAX3 and PAX7 to the histone methylation machinery and involved in myogenesis. Associates with a histone methyltransferase complex that specifically mediates dimethylation and trimethylation of 'Lys-4' of histone H3. Mediates the recruitment of that complex to the transcription factors PAX3 and PAX7 on chromatin to regulate the expression of genes involved in muscle progenitor cells proliferation including ID3 and CDC20. The chain is PAX3- and PAX7-binding protein 1 (PAXBP1) from Homo sapiens (Human).